The chain runs to 700 residues: Elongation factor G (700 aa).

Positions 8-290 constitute a tr-type G domain; sequence ERYRNIGISA…GVIDFMPSPI (283 aa). GTP is bound by residues 17–24, 88–92, and 142–145; these read AHIDAGKT, DTPGH, and NKMD.

It belongs to the TRAFAC class translation factor GTPase superfamily. Classic translation factor GTPase family. EF-G/EF-2 subfamily.

It localises to the cytoplasm. Functionally, catalyzes the GTP-dependent ribosomal translocation step during translation elongation. During this step, the ribosome changes from the pre-translocational (PRE) to the post-translocational (POST) state as the newly formed A-site-bound peptidyl-tRNA and P-site-bound deacylated tRNA move to the P and E sites, respectively. Catalyzes the coordinated movement of the two tRNA molecules, the mRNA and conformational changes in the ribosome. In Methylibium petroleiphilum (strain ATCC BAA-1232 / LMG 22953 / PM1), this protein is Elongation factor G.